We begin with the raw amino-acid sequence, 504 residues long: D-alanine--D-alanyl carrier protein ligase (504 aa).

Position 152–153 (152–153) interacts with ATP; sequence TS. D197 contributes to the D-alanine binding site. 292–297 contacts ATP; sequence NTYGPT. D-alanine is bound at residue V301. Residues D383, 394-397, and K492 contribute to the ATP site; that span reads YNGR. D-alanine is bound at residue K492.

It belongs to the ATP-dependent AMP-binding enzyme family. DltA subfamily.

The protein resides in the cytoplasm. The enzyme catalyses holo-[D-alanyl-carrier protein] + D-alanine + ATP = D-alanyl-[D-alanyl-carrier protein] + AMP + diphosphate. It participates in cell wall biogenesis; lipoteichoic acid biosynthesis. Catalyzes the first step in the D-alanylation of lipoteichoic acid (LTA), the activation of D-alanine and its transfer onto the D-alanyl carrier protein (Dcp) DltC. In an ATP-dependent two-step reaction, forms a high energy D-alanyl-AMP intermediate, followed by transfer of the D-alanyl residue as a thiol ester to the phosphopantheinyl prosthetic group of the Dcp. D-alanylation of LTA plays an important role in modulating the properties of the cell wall in Gram-positive bacteria, influencing the net charge of the cell wall. This is D-alanine--D-alanyl carrier protein ligase from Bacillus cereus (strain AH187).